The primary structure comprises 497 residues: Cytochrome P450 71A16 (497 aa).

Residues 1–21 (MEMMILISLCLTTFLTILLFF) traverse the membrane as a helical segment. Cys-439 lines the heme pocket.

Belongs to the cytochrome P450 family. It depends on heme as a cofactor.

The protein resides in the membrane. Its function is as follows. Possesses triterpene oxidizing activity. Catalyzes the C23 hydroxylation of marneral to form 23-hydroxymarneral. Catalyzes the C23 hydroxylation of marnerol to form 23-hydroxymarnerol. This chain is Cytochrome P450 71A16 (CYP71A16), found in Arabidopsis thaliana (Mouse-ear cress).